Consider the following 569-residue polypeptide: Glutamate--tRNA ligase (569 aa).

The 'HIGH' region signature appears at P99–H109.

The protein belongs to the class-I aminoacyl-tRNA synthetase family. Glutamate--tRNA ligase type 2 subfamily.

Its subcellular location is the cytoplasm. It catalyses the reaction tRNA(Glu) + L-glutamate + ATP = L-glutamyl-tRNA(Glu) + AMP + diphosphate. Catalyzes the attachment of glutamate to tRNA(Glu) in a two-step reaction: glutamate is first activated by ATP to form Glu-AMP and then transferred to the acceptor end of tRNA(Glu). This is Glutamate--tRNA ligase from Korarchaeum cryptofilum (strain OPF8).